The sequence spans 240 residues: 7-cyano-7-deazaguanine synthase (240 aa).

Residue 9 to 19 participates in ATP binding; sequence FSGGLDSTACL. The Zn(2+) site is built by cysteine 195, cysteine 210, cysteine 213, and cysteine 216.

It belongs to the QueC family. It depends on Zn(2+) as a cofactor.

The enzyme catalyses 7-carboxy-7-deazaguanine + NH4(+) + ATP = 7-cyano-7-deazaguanine + ADP + phosphate + H2O + H(+). It functions in the pathway purine metabolism; 7-cyano-7-deazaguanine biosynthesis. In terms of biological role, catalyzes the ATP-dependent conversion of 7-carboxy-7-deazaguanine (CDG) to 7-cyano-7-deazaguanine (preQ(0)). The sequence is that of 7-cyano-7-deazaguanine synthase from Pyrococcus furiosus (strain ATCC 43587 / DSM 3638 / JCM 8422 / Vc1).